The primary structure comprises 154 residues: Nuclear cap-binding protein subunit 2-A (154 aa).

MRNA contacts are provided by residues Y10, Y33, 102 to 106 (RVDWD), 113 to 117 (RQYGR), and 123 to 124 (QV). The region spanning 30–108 (STLYVGNLSF…RLIRVDWDAG (79 aa)) is the RRM domain.

It belongs to the RRM NCBP2 family. Component of the nuclear cap-binding complex (CBC), a heterodimer composed of Cbp80 and Cbp20 that interacts with m7GpppG-capped RNA. Interacts with Ars2.

Its subcellular location is the nucleus. Component of the cap-binding complex (CBC), which binds co-transcriptionally to the 5' cap of pre-mRNAs and is involved in various processes such as pre-mRNA splicing and RNA-mediated gene silencing (RNAi). The CBC complex is involved in miRNA-mediated RNA interference via its interaction with Ars2 and is required for primary microRNAs (miRNAs) processing. Also involved in innate immunity via the short interfering RNAs (siRNAs) processing machinery by restricting the viral RNA production. In the CBC complex, Cbp20 recognizes and binds capped RNAs (m7GpppG-capped RNA) but requires Cbp80 to stabilize the movement of its N-terminal loop and lock the CBC into a high affinity cap-binding state with the cap structure. This Drosophila virilis (Fruit fly) protein is Nuclear cap-binding protein subunit 2-A (Cbp20-A).